Consider the following 845-residue polypeptide: uncharacterized protein (845 aa).

Disordered regions lie at residues 17–37 and 550–573; these read RRKQ…NDQP and AATE…NESL. Residues 622-707 adopt a coiled-coil conformation; it reads LSEQRFEREN…ELKKSNEHTR (86 aa).

This is an uncharacterized protein from Saccharum officinarum (Sugarcane).